The primary structure comprises 990 residues: Translation initiation factor IF-2 (990 aa).

The tract at residues 92 to 402 is disordered; that stretch reads KKRTFVKRDD…QRDEHLQAAP (311 aa). Composition is skewed to low complexity over residues 104 to 116 and 131 to 151; these read EGAADGAGSAAFA and EAPAEQAQADAAPAADGAAPA. A compositionally biased stretch (basic and acidic residues) spans 158–201; it reads ELARREEQARHQAELIRRQEAELAAKRAAREAREKREREAEERA. A compositionally biased stretch (low complexity) spans 223 to 243; that stretch reads TREQAAEATARNAAQLQARAK. Residues 244-264 show a composition bias toward basic and acidic residues; that stretch reads AAAESKARSDEEAARAADLDA. Composition is skewed to low complexity over residues 281–290 and 318–342; these read ATPKKAVMVA and PAVGATRTAAGAARAGAAAGAPGAG. 2 stretches are compositionally biased toward basic and acidic residues: residues 358–368 and 386–398; these read PAKKKEIKTRG and RRGDSRDQRDEHL. The tr-type G domain maps to 490–659; sequence PRAPVVTVMG…LLQADVMELK (170 aa). The G1 stretch occupies residues 499–506; the sequence is GHVDHGKT. Residue 499 to 506 participates in GTP binding; the sequence is GHVDHGKT. Residues 524 to 528 form a G2 region; the sequence is GITQH. The interval 545-548 is G3; it reads DTPG. Residues 545 to 549 and 599 to 602 each bind GTP; these read DTPGH and TKAD. The tract at residues 599–602 is G4; that stretch reads TKAD. The interval 635–637 is G5; it reads SSK.

Belongs to the TRAFAC class translation factor GTPase superfamily. Classic translation factor GTPase family. IF-2 subfamily.

It is found in the cytoplasm. In terms of biological role, one of the essential components for the initiation of protein synthesis. Protects formylmethionyl-tRNA from spontaneous hydrolysis and promotes its binding to the 30S ribosomal subunits. Also involved in the hydrolysis of GTP during the formation of the 70S ribosomal complex. This Verminephrobacter eiseniae (strain EF01-2) protein is Translation initiation factor IF-2.